The sequence spans 198 residues: Segregation and condensation protein B (198 aa).

Residues 167–198 (PKLADPEAEDPDQSEMDLFFDRFNQSKEQEEE) form a disordered region. The span at 172 to 181 (PEAEDPDQSE) shows a compositional bias: acidic residues.

This sequence belongs to the ScpB family. In terms of assembly, homodimer. Homodimerization may be required to stabilize the binding of ScpA to the Smc head domains. Component of a cohesin-like complex composed of ScpA, ScpB and the Smc homodimer, in which ScpA and ScpB bind to the head domain of Smc. The presence of the three proteins is required for the association of the complex with DNA.

Its subcellular location is the cytoplasm. Its function is as follows. Participates in chromosomal partition during cell division. May act via the formation of a condensin-like complex containing Smc and ScpA that pull DNA away from mid-cell into both cell halves. The sequence is that of Segregation and condensation protein B from Listeria innocua serovar 6a (strain ATCC BAA-680 / CLIP 11262).